Here is a 592-residue protein sequence, read N- to C-terminus: AT-rich interactive domain-containing protein 5A (592 aa).

Residues 1-53 are disordered; the sequence is MAPPVKGKRKQSEEGEPLDPPVSPQPDGEPRSRSPVRLEEPPEAGREREEEQE. Positions 1 to 299 are interaction with SOX9; sequence MAPPVKGKRK…AAPPLESPQS (299 aa). Residue Ser-23 is modified to Phosphoserine. Over residues 28–49 the composition is skewed to basic and acidic residues; sequence GEPRSRSPVRLEEPPEAGRERE. The region spanning 52–144 is the ARID domain; it reads QEEEQAFLVS…LVLPYVRHLK (93 aa). Glycyl lysine isopeptide (Lys-Gly) (interchain with G-Cter in ubiquitin) cross-links involve residues Lys-82 and Lys-91. A disordered region spans residues 143-225; the sequence is LKGEDDKPLP…RGPAAGPSLP (83 aa). Over residues 162-186 the composition is skewed to basic and acidic residues; it reads MAKEPRGDDGATERPKKVKEEKRVD. Residue Ser-253 is modified to Phosphoserine. The disordered stretch occupies residues 277–333; sequence CRHGAGGEPQAPPAAPPLESPQSPGGPAEDSRHRLTPLEGRQAPGGGLWGETQAGPR. Pro residues predominate over residues 286-295; it reads QAPPAAPPLE. Residues Ser-438 and Ser-463 each carry the phosphoserine modification.

In terms of assembly, interacts with SOX9. Interacts with ESR1. Interacts with RORC. Phosphorylated by MAPK14 on serine residues involving a TLR4 signaling pathway upon lipopolysaccharide (LPS) stimulation leading to its ubiquitination and proteasomal degradation. Post-translationally, ubiquitinated leading to proteasomal degradation; involving WWP1 linked to MAPK14-mediated phosphorylation upon LPS stimulation.

Its subcellular location is the nucleus. DNA-binding protein that may regulate transcription and act as a repressor by binding to AT-rich stretches in the promoter region of target genes. May act as repressor and down-regulate enhancer-dependent gene expressison. May positively regulate chondrocyte-specific transcription such as of COL2A1 in collaboration with SOX9 and positively regulate histone H3 acetylation at chondrocyte-specific genes. May stimulate early-stage chondrocyte differentiation and inhibit later stage differention. Can repress ESR1-mediated transcriptional activation; proposed to act as corepressor for selective nuclear hormone receptors. As an RNA-binding protein, involved in the regulation of inflammatory response by stabilizing selective inflammation-related mRNAs, such as STAT3 and TBX21. Also stabilizes IL6 mRNA. Binds to stem loop structures located in the 3'UTRs of IL6, STAT3 and TBX21 mRNAs; at least for STAT3 prevents binding of ZC3H12A to the mRNA stem loop structure thus inhibiting its degradation activity. Contributes to elevated IL6 levels possibly implicated in autoimmunity processes. IL6-dependent stabilization of STAT3 mRNA may promote differentiation of naive CD4+ T-cells into T-helper Th17 cells. In CD4+ T-cells may also inhibit RORC-induced Th17 cell differentiation independently of IL6 signaling. Stabilization of TBX21 mRNA contributes to elevated interferon-gamma secretion in Th1 cells possibly implicated in the establishment of septic shock. Stabilizes TNFRSF4/OX40 mRNA by binding to the conserved stem loop structure in its 3'UTR; thereby competing with the mRNA-destabilizing functions of RC3H1 and endoribonuclease ZC3H12A. The polypeptide is AT-rich interactive domain-containing protein 5A (ARID5A) (Bos taurus (Bovine)).